The following is a 252-amino-acid chain: Imidazole glycerol phosphate synthase subunit HisF (252 aa).

Residues Asp11 and Asp130 contribute to the active site.

Belongs to the HisA/HisF family. As to quaternary structure, heterodimer of HisH and HisF.

It localises to the cytoplasm. It catalyses the reaction 5-[(5-phospho-1-deoxy-D-ribulos-1-ylimino)methylamino]-1-(5-phospho-beta-D-ribosyl)imidazole-4-carboxamide + L-glutamine = D-erythro-1-(imidazol-4-yl)glycerol 3-phosphate + 5-amino-1-(5-phospho-beta-D-ribosyl)imidazole-4-carboxamide + L-glutamate + H(+). The protein operates within amino-acid biosynthesis; L-histidine biosynthesis; L-histidine from 5-phospho-alpha-D-ribose 1-diphosphate: step 5/9. Functionally, IGPS catalyzes the conversion of PRFAR and glutamine to IGP, AICAR and glutamate. The HisF subunit catalyzes the cyclization activity that produces IGP and AICAR from PRFAR using the ammonia provided by the HisH subunit. The protein is Imidazole glycerol phosphate synthase subunit HisF of Bacillus licheniformis (strain ATCC 14580 / DSM 13 / JCM 2505 / CCUG 7422 / NBRC 12200 / NCIMB 9375 / NCTC 10341 / NRRL NRS-1264 / Gibson 46).